Consider the following 95-residue polypeptide: Mitochondrial import inner membrane translocase subunit Tim13 (95 aa).

Position 1 is an N-acetylmethionine (Met-1). Ser-7 bears the Phosphoserine mark. A Twin CX3C motif motif is present at residues 46–69 (CFRKCIGKPGGSLDNSEQKCIAMC). Cystine bridges form between Cys-46/Cys-69 and Cys-50/Cys-65. Residue Lys-53 is modified to N6-succinyllysine.

This sequence belongs to the small Tim family. In terms of assembly, heterohexamer; composed of 3 copies of TIMM8 (TIMM8A or TIMM8B) and 3 copies of TIMM13, named soluble 70 kDa complex. Associates with the TIM22 complex, whose core is composed of TIMM22. Present at high level in liver and brain, and at lower level in muscle and heart. In CNS sections, it is predominantly present in the soma and the dendritic portion of the Purkinje cells of the cerebellum, but not in the glial cells. Scattered expression also is also detected in the brain stem, olfactory bulb, substantia nigra, hippocampus and striatum (at protein level).

It is found in the mitochondrion inner membrane. Functionally, mitochondrial intermembrane chaperone that participates in the import and insertion of some multi-pass transmembrane proteins into the mitochondrial inner membrane. Also required for the transfer of beta-barrel precursors from the TOM complex to the sorting and assembly machinery (SAM complex) of the outer membrane. Acts as a chaperone-like protein that protects the hydrophobic precursors from aggregation and guide them through the mitochondrial intermembrane space. The TIMM8-TIMM13 complex mediates the import of proteins such as TIMM23, SLC25A12/ARALAR1 and SLC25A13/ARALAR2, while the predominant TIMM9-TIMM10 70 kDa complex mediates the import of much more proteins. This is Mitochondrial import inner membrane translocase subunit Tim13 (Timm13) from Mus musculus (Mouse).